The following is a 62-amino-acid chain: uncharacterized protein (62 aa).

Residues 28 to 61 (KIESTHPEIAKKLKEAAEKYREVEEILKKAVDMV) adopt a coiled-coil conformation.

This is an uncharacterized protein from Archaeoglobus fulgidus (strain ATCC 49558 / DSM 4304 / JCM 9628 / NBRC 100126 / VC-16).